We begin with the raw amino-acid sequence, 369 residues long: Cytokine receptor common subunit gamma (369 aa).

Residues 1–22 (MLKPSLPFTSLLFLQLPLLGVG) form the signal peptide. Topologically, residues 23–262 (LNTTILTPNG…ENPFLFALEA (240 aa)) are extracellular. Residues Asn-24, Asn-71, Asn-75, and Asn-84 are each glycosylated (N-linked (GlcNAc...) asparagine). Residues Cys-62 and Cys-72 are joined by a disulfide bond. A disulfide bond links Cys-102 and Cys-115. The Fibronectin type-III domain maps to 156 to 253 (APENLTLHKL…IHWGSNTSKE (98 aa)). Asn-159 carries N-linked (GlcNAc...) asparagine glycosylation. Residues Cys-182 and Cys-231 are joined by a disulfide bond. The WSXWS motif signature appears at 237–241 (WSEWS). Residue Asn-249 is glycosylated (N-linked (GlcNAc...) asparagine). Residues 263–283 (VVISVGSMGLIISLLCVYFWL) form a helical membrane-spanning segment. The Cytoplasmic segment spans residues 284-369 (ERTMPRIPTL…PPCYTLKPET (86 aa)). The Box 1 motif signature appears at 286–294 (TMPRIPTLK). Thr-292 carries the phosphothreonine modification.

The protein belongs to the type I cytokine receptor family. Type 5 subfamily. The gamma subunit is common to the IL2, IL4, IL7, IL15, IL21 and probably also the IL13 receptors. Interacts with SHB upon interleukin stimulation. Interacts with IL9. As to quaternary structure, (Microbial infection) Interacts with HTLV-1 accessory protein p12I.

Its subcellular location is the cell membrane. The protein resides in the cell surface. Its function is as follows. Common subunit for the receptors for a variety of interleukins. Probably in association with IL15RA, involved in the stimulation of neutrophil phagocytosis by IL15. The polypeptide is Cytokine receptor common subunit gamma (IL2RG) (Homo sapiens (Human)).